Reading from the N-terminus, the 549-residue chain is MLENYKNLATVGYQLFKPSLISWLEQEESRTVQRGDFQASEWKVQLKTKELALQQDVLGEPTSSGIQMIGSHNGGEVSDVKQCGDVSSEHSCLKTHVRTQNSENTFECYLYGVDFLTLHKKTSTGEQRSVFSQCGKAFSLNPDVVCQRTCTGEKAFDCSDSGKSFINHSHLQGHLRTHNGESLHEWKECGRGFIHSTDLAVRIQTHRSEKPYKCKECGKGFRYSAYLNIHMGTHTGDNPYECKECGKAFTRSCQLTQHRKTHTGEKPYKCKDCGRAFTVSSCLSQHMKIHVGEKPYECKECGIAFTRSSQLTEHLKTHTAKDPFECKICGKSFRNSSCLSDHFRIHTGIKPYKCKDCGKAFTQNSDLTKHARTHSGERPYECKECGKAFARSSRLSEHTRTHTGEKPFECVKCGKAFAISSNLSGHLRIHTGEKPFECLECGKAFTHSSSLNNHMRTHSAKKPFTCMECGKAFKFPTCVNLHMRIHTGEKPYKCKQCGKSFSYSNSFQLHERTHTGEKPYECKECGKAFSSSSSFRNHERRHADERLSA.

One can recognise a KRAB domain in the interval 1–42; the sequence is MLENYKNLATVGYQLFKPSLISWLEQEESRTVQRGDFQASEW. The segment at 156-178 adopts a C2H2-type 1; degenerate zinc-finger fold; it reads FDCSDSGKSFINHSHLQGHLRTH. Residues 184-206 form a C2H2-type 2; degenerate zinc finger; the sequence is HEWKECGRGFIHSTDLAVRIQTH. C2H2-type zinc fingers lie at residues 212-234, 240-262, 268-290, 296-318, 324-346, 352-374, 380-402, 408-430, 436-458, 464-486, 492-514, and 520-542; these read YKCK…MGTH, YECK…RKTH, YKCK…MKIH, YECK…LKTH, FECK…FRIH, YKCK…ARTH, YECK…TRTH, FECV…LRIH, FECL…MRTH, FTCM…MRIH, YKCK…ERTH, and YECK…ERRH. The disordered stretch occupies residues 530–549; that stretch reads SSSSSFRNHERRHADERLSA.

It belongs to the krueppel C2H2-type zinc-finger protein family.

It localises to the nucleus. May be involved in transcriptional regulation. The sequence is that of Zinc finger protein 266 (ZNF266) from Homo sapiens (Human).